The primary structure comprises 488 residues: Glutamyl-tRNA(Gln) amidotransferase subunit A (488 aa).

Catalysis depends on charge relay system residues Lys-77 and Ser-152. The active-site Acyl-ester intermediate is Ser-176.

Belongs to the amidase family. GatA subfamily. In terms of assembly, heterotrimer of A, B and C subunits.

It catalyses the reaction L-glutamyl-tRNA(Gln) + L-glutamine + ATP + H2O = L-glutaminyl-tRNA(Gln) + L-glutamate + ADP + phosphate + H(+). In terms of biological role, allows the formation of correctly charged Gln-tRNA(Gln) through the transamidation of misacylated Glu-tRNA(Gln) in organisms which lack glutaminyl-tRNA synthetase. The reaction takes place in the presence of glutamine and ATP through an activated gamma-phospho-Glu-tRNA(Gln). This Streptococcus pyogenes serotype M49 (strain NZ131) protein is Glutamyl-tRNA(Gln) amidotransferase subunit A.